A 372-amino-acid chain; its full sequence is Flagellar P-ring protein (372 aa).

Residues 1–26 (MNLSSLPHRLLAAAVALCAIAAPASA) form the signal peptide.

This sequence belongs to the FlgI family. As to quaternary structure, the basal body constitutes a major portion of the flagellar organelle and consists of four rings (L,P,S, and M) mounted on a central rod.

The protein resides in the periplasm. The protein localises to the bacterial flagellum basal body. Assembles around the rod to form the L-ring and probably protects the motor/basal body from shearing forces during rotation. The sequence is that of Flagellar P-ring protein from Xanthomonas campestris pv. campestris (strain ATCC 33913 / DSM 3586 / NCPPB 528 / LMG 568 / P 25).